The following is a 341-amino-acid chain: UDP-3-O-(3-hydroxymyristoyl)glucosamine N-acyltransferase (341 aa).

Catalysis depends on H239, which acts as the Proton acceptor.

Belongs to the transferase hexapeptide repeat family. LpxD subfamily. In terms of assembly, homotrimer.

The catalysed reaction is a UDP-3-O-[(3R)-3-hydroxyacyl]-alpha-D-glucosamine + a (3R)-hydroxyacyl-[ACP] = a UDP-2-N,3-O-bis[(3R)-3-hydroxyacyl]-alpha-D-glucosamine + holo-[ACP] + H(+). It carries out the reaction UDP-3-O-[(3R)-3-hydroxytetradecanoyl]-alpha-D-glucosamine + (3R)-hydroxytetradecanoyl-[ACP] = UDP-2-N,3-O-bis[(3R)-3-hydroxytetradecanoyl]-alpha-D-glucosamine + holo-[ACP] + H(+). Its pathway is glycolipid biosynthesis; lipid IV(A) biosynthesis; lipid IV(A) from (3R)-3-hydroxytetradecanoyl-[acyl-carrier-protein] and UDP-N-acetyl-alpha-D-glucosamine: step 3/6. Its function is as follows. Catalyzes the N-acylation of UDP-3-O-(hydroxytetradecanoyl)glucosamine using 3-hydroxytetradecanoyl-ACP as the acyl donor. Is involved in the biosynthesis of lipid A, a phosphorylated glycolipid that anchors the lipopolysaccharide to the outer membrane of the cell. This chain is UDP-3-O-(3-hydroxymyristoyl)glucosamine N-acyltransferase, found in Escherichia coli O157:H7.